The following is a 160-amino-acid chain: uncharacterized protein (160 aa).

The Cupin type-2 domain occupies 37-110 (LMSLKPKEDI…TDYLKLYTIY (74 aa)).

It is found in the virion. This is an uncharacterized protein from Acanthamoeba polyphaga mimivirus (APMV).